Here is a 255-residue protein sequence, read N- to C-terminus: Pimeloyl-[acyl-carrier protein] methyl ester esterase (255 aa).

The 227-residue stretch at 16–242 (LVLLHGWGMN…SSHAPFITEP (227 aa)) folds into the AB hydrolase-1 domain. Residues Trp22, 82–83 (SL), and 143–147 (FMALQ) contribute to the substrate site. Residue Ser82 is the Nucleophile of the active site. Catalysis depends on residues Asp207 and His235. His235 is a substrate binding site.

This sequence belongs to the AB hydrolase superfamily. Carboxylesterase BioH family. Monomer.

It is found in the cytoplasm. The enzyme catalyses 6-carboxyhexanoyl-[ACP] methyl ester + H2O = 6-carboxyhexanoyl-[ACP] + methanol + H(+). Its pathway is cofactor biosynthesis; biotin biosynthesis. In terms of biological role, the physiological role of BioH is to remove the methyl group introduced by BioC when the pimeloyl moiety is complete. It allows to synthesize pimeloyl-ACP via the fatty acid synthetic pathway through the hydrolysis of the ester bonds of pimeloyl-ACP esters. The polypeptide is Pimeloyl-[acyl-carrier protein] methyl ester esterase (Vibrio vulnificus (strain YJ016)).